Reading from the N-terminus, the 276-residue chain is MVATPDTTADVLTIAGRSFRSRLMTGTGKYRSFEQMRASIAASGCEIVTVAVRRVQTNAPGHEGLAEALDWQKIWMLPNTAGCATAEEAIRVARLGREMAKLLGQEDNNFVKLEVIPDSRYLLPDPIGTLQAAEQLVKEGFAVLPYINADPLLAKRLEEVGCATVMPLGSPIGSGQGIRNEANIRIIVENAKVPVVVDAGIGTASEAAQAMELGADALLINTAIAQAEDPARMAQAMAMATIAGRLAFQAGRIPTRSAAIASSPQTGLVGQSPATV.

Residue lysine 112 is the Schiff-base intermediate with DXP of the active site. Residues glycine 173, alanine 199 to glycine 200, and asparagine 221 to threonine 222 contribute to the 1-deoxy-D-xylulose 5-phosphate site.

The protein belongs to the ThiG family. Homotetramer. Forms heterodimers with either ThiH or ThiS.

The protein resides in the cytoplasm. The catalysed reaction is [ThiS sulfur-carrier protein]-C-terminal-Gly-aminoethanethioate + 2-iminoacetate + 1-deoxy-D-xylulose 5-phosphate = [ThiS sulfur-carrier protein]-C-terminal Gly-Gly + 2-[(2R,5Z)-2-carboxy-4-methylthiazol-5(2H)-ylidene]ethyl phosphate + 2 H2O + H(+). Its pathway is cofactor biosynthesis; thiamine diphosphate biosynthesis. Functionally, catalyzes the rearrangement of 1-deoxy-D-xylulose 5-phosphate (DXP) to produce the thiazole phosphate moiety of thiamine. Sulfur is provided by the thiocarboxylate moiety of the carrier protein ThiS. In vitro, sulfur can be provided by H(2)S. The polypeptide is Thiazole synthase (Synechococcus sp. (strain ATCC 27144 / PCC 6301 / SAUG 1402/1) (Anacystis nidulans)).